Consider the following 520-residue polypeptide: Succinyl-CoA:3-ketoacid coenzyme A transferase 2A, mitochondrial (520 aa).

The N-terminal 39 residues, 1–39 (MAALRLLAWAFSRRVSAHRPQPTLPHHLIRHYPTTRCGK), are a transit peptide targeting the mitochondrion. Positions 280–299 (ERLTTRDSPPAPGSKDQDPK) are disordered. Glu342 serves as the catalytic 5-glutamyl coenzyme A thioester intermediate.

It belongs to the 3-oxoacid CoA-transferase family. In terms of assembly, homodimer. In terms of tissue distribution, expressed in flagella of epididymal sperm.

The protein resides in the mitochondrion. It carries out the reaction a 3-oxo acid + succinyl-CoA = a 3-oxoacyl-CoA + succinate. It participates in ketone metabolism; succinyl-CoA degradation; acetoacetyl-CoA from succinyl-CoA: step 1/1. Its function is as follows. Key enzyme for ketone body catabolism. Transfers the CoA moiety from succinate to acetoacetate. Formation of the enzyme-CoA intermediate proceeds via an unstable anhydride species formed between the carboxylate groups of the enzyme and substrate. Probably play and important roles in the energy metabolism of spermatozoa. This chain is Succinyl-CoA:3-ketoacid coenzyme A transferase 2A, mitochondrial (Oxct2a), found in Rattus norvegicus (Rat).